Reading from the N-terminus, the 852-residue chain is Bifunctional isopimaradiene synthase, chloroplastic (852 aa).

A chloroplast-targeting transit peptide spans 1-53 (HHLTANTQSIPHFSTTLNAGSSARKRRSLYLRWGKGSNKIIACVGEGATSVPY). Residue lysine 252 participates in substrate binding. The Mg(2+) site is built by aspartate 385 and aspartate 387. Residues 385–388 (DIDD) carry the DXDD motif motif. Substrate is bound at residue lysine 472. Residues aspartate 604, aspartate 608, asparagine 748, threonine 752, and glutamate 756 each coordinate Mg(2+). The DDXXD motif signature appears at 604–608 (DDLYD).

It belongs to the terpene synthase family. Tpsd subfamily. It depends on Mg(2+) as a cofactor.

The protein resides in the plastid. The protein localises to the chloroplast. It carries out the reaction (2E,6E,10E)-geranylgeranyl diphosphate = (+)-copalyl diphosphate. The enzyme catalyses (+)-copalyl diphosphate = isopimara-7,15-diene + diphosphate. The protein operates within terpene metabolism; oleoresin biosynthesis. In terms of biological role, involved in defensive oleoresin formation in conifers in response to insect attack or other injury. Involved in diterpene (C20) olefins biosynthesis. Bifunctional enzyme that catalyzes two sequential cyclizations of geranylgeranyl diphosphate (GGPP) to isopimara-7,15-diene. The chain is Bifunctional isopimaradiene synthase, chloroplastic (TPS-ISO) from Abies balsamea (Balsam fir).